The primary structure comprises 418 residues: Light-independent protochlorophyllide reductase subunit N (418 aa).

Cysteine 17, cysteine 42, and cysteine 103 together coordinate [4Fe-4S] cluster.

Belongs to the BchN/ChlN family. As to quaternary structure, protochlorophyllide reductase is composed of three subunits; ChlL, ChlN and ChlB. Forms a heterotetramer of two ChlB and two ChlN subunits. The cofactor is [4Fe-4S] cluster.

The catalysed reaction is chlorophyllide a + oxidized 2[4Fe-4S]-[ferredoxin] + 2 ADP + 2 phosphate = protochlorophyllide a + reduced 2[4Fe-4S]-[ferredoxin] + 2 ATP + 2 H2O. It functions in the pathway porphyrin-containing compound metabolism; chlorophyll biosynthesis (light-independent). Its function is as follows. Component of the dark-operative protochlorophyllide reductase (DPOR) that uses Mg-ATP and reduced ferredoxin to reduce ring D of protochlorophyllide (Pchlide) to form chlorophyllide a (Chlide). This reaction is light-independent. The NB-protein (ChlN-ChlB) is the catalytic component of the complex. This Prochlorococcus marinus subsp. pastoris (strain CCMP1986 / NIES-2087 / MED4) protein is Light-independent protochlorophyllide reductase subunit N.